Here is a 159-residue protein sequence, read N- to C-terminus: Phosphopantetheine adenylyltransferase (159 aa).

Serine 9 provides a ligand contact to substrate. ATP is bound by residues 9–10 (SF) and histidine 17. Substrate-binding residues include lysine 41, leucine 73, and lysine 87. Residues 88-90 (GLR), glutamate 98, and 123-129 (YSYLSSS) each bind ATP.

This sequence belongs to the bacterial CoaD family. As to quaternary structure, homohexamer. The cofactor is Mg(2+).

The protein resides in the cytoplasm. It catalyses the reaction (R)-4'-phosphopantetheine + ATP + H(+) = 3'-dephospho-CoA + diphosphate. It functions in the pathway cofactor biosynthesis; coenzyme A biosynthesis; CoA from (R)-pantothenate: step 4/5. In terms of biological role, reversibly transfers an adenylyl group from ATP to 4'-phosphopantetheine, yielding dephospho-CoA (dPCoA) and pyrophosphate. This chain is Phosphopantetheine adenylyltransferase, found in Clostridium botulinum (strain Alaska E43 / Type E3).